The chain runs to 479 residues: Aspartyl/glutamyl-tRNA(Asn/Gln) amidotransferase subunit B (479 aa).

The protein belongs to the GatB/GatE family. GatB subfamily. In terms of assembly, heterotrimer of A, B and C subunits.

The enzyme catalyses L-glutamyl-tRNA(Gln) + L-glutamine + ATP + H2O = L-glutaminyl-tRNA(Gln) + L-glutamate + ADP + phosphate + H(+). It carries out the reaction L-aspartyl-tRNA(Asn) + L-glutamine + ATP + H2O = L-asparaginyl-tRNA(Asn) + L-glutamate + ADP + phosphate + 2 H(+). In terms of biological role, allows the formation of correctly charged Asn-tRNA(Asn) or Gln-tRNA(Gln) through the transamidation of misacylated Asp-tRNA(Asn) or Glu-tRNA(Gln) in organisms which lack either or both of asparaginyl-tRNA or glutaminyl-tRNA synthetases. The reaction takes place in the presence of glutamine and ATP through an activated phospho-Asp-tRNA(Asn) or phospho-Glu-tRNA(Gln). The polypeptide is Aspartyl/glutamyl-tRNA(Asn/Gln) amidotransferase subunit B (Geobacter sp. (strain M21)).